Consider the following 508-residue polypeptide: Inosine-5'-monophosphate dehydrogenase (508 aa).

CBS domains are found at residues 111 to 170 (FITD…EITL) and 174 to 230 (MTTN…PDAS). Residues Asp-267 and 317-319 (GMG) contribute to the NAD(+) site. Residues Gly-319 and Gly-321 each coordinate K(+). Residue Ser-322 coordinates IMP. Cys-324 provides a ligand contact to K(+). The Thioimidate intermediate role is filled by Cys-324. Residues 357-359 (DGG), 380-381 (GF), and 404-408 (YRGMA) each bind IMP. Residue Arg-420 is the Proton acceptor of the active site. Gln-432 is a binding site for IMP. Gly-492 contributes to the K(+) binding site.

Belongs to the IMPDH/GMPR family. As to quaternary structure, homotetramer. Requires K(+) as cofactor.

It carries out the reaction IMP + NAD(+) + H2O = XMP + NADH + H(+). The protein operates within purine metabolism; XMP biosynthesis via de novo pathway; XMP from IMP: step 1/1. Its activity is regulated as follows. Mycophenolic acid (MPA) is a non-competitive inhibitor that prevents formation of the closed enzyme conformation by binding to the same site as the amobile flap. In contrast, mizoribine monophosphate (MZP) is a competitive inhibitor that induces the closed conformation. MPA is a potent inhibitor of mammalian IMPDHs but a poor inhibitor of the bacterial enzymes. MZP is a more potent inhibitor of bacterial IMPDH. Catalyzes the conversion of inosine 5'-phosphate (IMP) to xanthosine 5'-phosphate (XMP), the first committed and rate-limiting step in the de novo synthesis of guanine nucleotides, and therefore plays an important role in the regulation of cell growth. In Leptospira interrogans serogroup Icterohaemorrhagiae serovar Lai (strain 56601), this protein is Inosine-5'-monophosphate dehydrogenase.